Here is a 556-residue protein sequence, read N- to C-terminus: Small ribosomal subunit protein bS1 (556 aa).

S1 motif domains are found at residues 35–105, 120–183, 204–272, 289–359, 377–444, and 461–525; these read TIKE…ISQQ, NAII…ISRK, TEPV…LSIK, GYAI…VSLK, DVLE…LSAK, and DSVI…ASVH.

Belongs to the bacterial ribosomal protein bS1 family.

Its function is as follows. Binds mRNA; thus facilitating recognition of the initiation point. It is needed to translate mRNA with a short Shine-Dalgarno (SD) purine-rich sequence. In Helicobacter pylori (strain ATCC 700392 / 26695) (Campylobacter pylori), this protein is Small ribosomal subunit protein bS1 (rpsA).